The primary structure comprises 305 residues: Coiled-coil domain-containing protein 50 (305 aa).

Alanine 2 is modified (N-acetylalanine). Position 5 is a phosphoserine (serine 5). The stretch at 86 to 130 forms a coiled coil; the sequence is EIAQEIQEKLTIEAERRRIQEKKDEDIARLLQEKELQEEKRRKKH. 2 disordered regions span residues 122–142 and 218–305; these read QEEK…VFGD and KKAK…HNKQ. Composition is skewed to basic and acidic residues over residues 218-239 and 247-263; these read KKAK…ECKL and KSKE…DRPS. A compositionally biased stretch (polar residues) spans 279–305; it reads THFTNQHSTTWHLPKSESSQKGFHNKQ.

Interacts with RNF126. Phosphorylated on tyrosine residues. In terms of tissue distribution, widely expressed.

It localises to the cytoplasm. In terms of biological role, involved in EGFR signaling. In Mus musculus (Mouse), this protein is Coiled-coil domain-containing protein 50 (Ccdc50).